The primary structure comprises 98 residues: uncharacterized protein (98 aa).

Positions 19-31 are enriched in basic residues; the sequence is RRMSKRSKNKAKK. The interval 19–47 is disordered; that stretch reads RRMSKRSKNKAKKERVPVEDRPPTPMPTS.

The protein belongs to the lymphocryptovirus BNLF2B family.

This is an uncharacterized protein from Epstein-Barr virus (strain AG876) (HHV-4).